The sequence spans 377 residues: Chaperone protein DnaJ (377 aa).

One can recognise a J domain in the interval 5 to 70; sequence DYYEVLGVGK…EKKAAYDQYG (66 aa). The CR-type zinc finger occupies 137 to 215; the sequence is GHEAQIRVPH…CHGQGKLKSQ (79 aa). Residues Cys150, Cys153, Cys167, Cys170, Cys189, Cys192, Cys203, and Cys206 each contribute to the Zn(2+) site. CXXCXGXG motif repeat units lie at residues 150 to 157, 167 to 174, 189 to 196, and 203 to 210; these read CDHCHGNG, CPTCHGAG, CPKCHGSG, and CTKCHGQG.

This sequence belongs to the DnaJ family. Homodimer. Zn(2+) serves as cofactor.

It is found in the cytoplasm. Its function is as follows. Participates actively in the response to hyperosmotic and heat shock by preventing the aggregation of stress-denatured proteins and by disaggregating proteins, also in an autonomous, DnaK-independent fashion. Unfolded proteins bind initially to DnaJ; upon interaction with the DnaJ-bound protein, DnaK hydrolyzes its bound ATP, resulting in the formation of a stable complex. GrpE releases ADP from DnaK; ATP binding to DnaK triggers the release of the substrate protein, thus completing the reaction cycle. Several rounds of ATP-dependent interactions between DnaJ, DnaK and GrpE are required for fully efficient folding. Also involved, together with DnaK and GrpE, in the DNA replication of plasmids through activation of initiation proteins. This Cupriavidus taiwanensis (strain DSM 17343 / BCRC 17206 / CCUG 44338 / CIP 107171 / LMG 19424 / R1) (Ralstonia taiwanensis (strain LMG 19424)) protein is Chaperone protein DnaJ.